Reading from the N-terminus, the 331-residue chain is Pantothenate kinase (331 aa).

An ATP-binding site is contributed by 109–116 (GSVAVGKS).

It belongs to the prokaryotic pantothenate kinase family.

The protein localises to the cytoplasm. The catalysed reaction is (R)-pantothenate + ATP = (R)-4'-phosphopantothenate + ADP + H(+). It participates in cofactor biosynthesis; coenzyme A biosynthesis; CoA from (R)-pantothenate: step 1/5. This chain is Pantothenate kinase, found in Sinorhizobium fredii (strain NBRC 101917 / NGR234).